Reading from the N-terminus, the 57-residue chain is Andropin (57 aa).

A signal peptide spans 1 to 23; that stretch reads MKYFVVLVVLALILAITVGPSDA.

Belongs to the andropin family. In terms of tissue distribution, ejaculatory duct of adult males.

It localises to the secreted. Male-specific peptide with moderate activity against Gram-positive bacteria. The sequence is that of Andropin (Anp) from Drosophila mauritiana (Fruit fly).